Consider the following 1233-residue polypeptide: Structural maintenance of chromosomes protein 1A (1233 aa).

An ATP-binding site is contributed by Gly32 to Ser39. Coiled-coil stretches lie at residues Glu104–Leu124 and Glu163–Ile503. The segment covering Ile284 to Gln293 has biased composition (basic and acidic residues). Disordered stretches follow at residues Ile284–Lys308 and Gln348–Glu369. A phosphoserine mark is found at Ser358 and Ser360. The 115-residue stretch at Val515–Ala629 folds into the SMC hinge domain. An N6-acetyllysine mark is found at Lys648 and Lys713. Positions Asp667–Met935 form a coiled coil. A disordered region spans residues Met947–Thr969. The segment covering Glu953 to Gln967 has biased composition (low complexity). Phosphoserine is present on residues Ser957, Ser962, Ser966, and Ser970. The stretch at Glu988–Asp1068 forms a coiled coil. At Lys1037 the chain carries N6-acetyllysine.

The protein belongs to the SMC family. SMC1 subfamily. As to quaternary structure, forms a heterodimer with SMC3 in cohesin complexes. Cohesin complexes are composed of the SMC1 (SMC1A or SMC1B) and SMC3 heterodimer attached via their SMC hinge domain, RAD21 which link them, and one STAG protein (STAG1, STAG2 or STAG3), which interacts with RAD21. In germ cell cohesin complexes, SMC1A is mutually exclusive with SMC1B. Interacts with STAG3. Found in a complex with CDCA5, SMC3 and RAD21, PDS5A/SCC-112 and PDS5B/APRIN. Found in a complex containing POLE and SMC3. Interacts with BRCA1, SYCP2, NDC80, RPGR and BRAT1. The cohesin complex interacts with the cohesin loading complex subunits NIPBL/Scc2 (via HEAT repeats) and MAU2/Scc4. NIPBL directly contacts all members of the complex, RAD21, SMC1A/B, SMC3 and STAG1. Phosphorylated upon ionizing radiation or DNA methylation. Phosphorylation of Ser-957 and Ser-966 activates it and is required for S-phase checkpoint activation. In terms of processing, ubiquitinated by the DCX(DCAF15) complex, leading to its degradation. As to expression, ubiquitous (at protein level).

Its subcellular location is the nucleus. It localises to the chromosome. The protein localises to the centromere. In terms of biological role, involved in chromosome cohesion during cell cycle and in DNA repair. Involved in DNA repair via its interaction with BRCA1 and its related phosphorylation by ATM, and works as a downstream effector in the ATM/NBS1 branch of S-phase checkpoint. Central component of cohesin complex. The cohesin complex is required for the cohesion of sister chromatids after DNA replication. The cohesin complex apparently forms a large proteinaceous ring within which sister chromatids can be trapped. At anaphase, the complex is cleaved and dissociates from chromatin, allowing sister chromatids to segregate. The cohesin complex may also play a role in spindle pole assembly during mitosis. Involved in DNA repair via its interaction with BRCA1 and its related phosphorylation by ATM, or via its phosphorylation by ATR. Works as a downstream effector both in the ATM/NBS1 branch and in the ATR/MSH2 branch of S-phase checkpoint. This chain is Structural maintenance of chromosomes protein 1A (Smc1a), found in Mus musculus (Mouse).